We begin with the raw amino-acid sequence, 95 residues long: Phospholipase A2 inhibitor gammaCdcPLI (95 aa).

4 disulfides stabilise this stretch: Cys2–Cys26, Cys5–Cys12, Cys19–Cys30, and Cys61–Cys77.

Forms dimers or higher order oligomers in a temperature-dependent manner in vitro. Expressed by the liver.

The protein resides in the secreted. Its function is as follows. Inhibits the enzymatic activity of basic and acidic PLA2 from B.jararacussu and B.pauloensis, respectively, in a dose-dependent manner. Also inhibits myotoxicity and cytotoxicity of BnSp-7 of B.pauloensis. The chain is Phospholipase A2 inhibitor gammaCdcPLI from Crotalus durissus collilineatus (Brazilian rattlesnake).